We begin with the raw amino-acid sequence, 111 residues long: HTH-type transcriptional regulator SinR (111 aa).

The HTH cro/C1-type domain maps to 6 to 61 (IKQYRKEKGYSLSELAEKAGVAKSYLSSIERNLQTNPSIQFLEKVSAVLDVSVHTL). Positions 17–36 (LSELAEKAGVAKSYLSSIER) form a DNA-binding region, H-T-H motif. Residues 65–103 (KDETEYDGQLDSEWENLVRDAMASGVSKKQFREFLDYQK) enclose the Sin domain.

Homotetramer. Also associates with SinI.

In terms of biological role, affects autolysin level and flagellation. This chain is HTH-type transcriptional regulator SinR (sinR), found in Bacillus licheniformis.